The chain runs to 190 residues: Potassium-transporting ATPase KdpC subunit (190 aa).

The helical transmembrane segment at 10–30 (TFLFLLLITGGVYPLLTTALG) threads the bilayer.

It belongs to the KdpC family. As to quaternary structure, the system is composed of three essential subunits: KdpA, KdpB and KdpC.

It localises to the cell inner membrane. In terms of biological role, part of the high-affinity ATP-driven potassium transport (or Kdp) system, which catalyzes the hydrolysis of ATP coupled with the electrogenic transport of potassium into the cytoplasm. This subunit acts as a catalytic chaperone that increases the ATP-binding affinity of the ATP-hydrolyzing subunit KdpB by the formation of a transient KdpB/KdpC/ATP ternary complex. This Escherichia coli (strain SMS-3-5 / SECEC) protein is Potassium-transporting ATPase KdpC subunit.